The primary structure comprises 622 residues: MALLQISEPGMAPAPHQRRLAVGIDLGTTNSLVAAVRNSIPEALPDDAGRVLLPSVVRYLDKGGRRIGHAAKEEAAIDPRNTIVSVKRFMGRGKAEVEGAANAPYEFVDAPGMVQIRTVDGVKSPVEVSAEILATLRQRAEDTLGDDLVGAVITVPAYFDDAQRQATKDAARLAGLNVLRLLNEPTAAAIAYGLDNGAEGLYAVYDLGGGTFDLSILKLTKGVFEVLAAGGDSALGGDDFDHLLFEHVLAQAGLEVAALAPEDVRLLLDRVRGAKEALSAAPQARVDVKLSTGEKLAQTITRDTFAALVEPLVQRTLGPTRKALRDAQVSAADIKGVVLVGGATRMPVIRDAVAKYFGQPPLVNLDPDQVVALGAAIQADLLAGNRSGGDDWLLLDVIPLSLGVETMGGLVEKIIPRNSTIPVARAQEFTTFKDGQTAMAIHVVQGERELVSDCRSLARFELRGIPPMTAGAARIRVTYQVDADGLLSVFAREQHSGVEASVVVKPSYGLGDDDIARMLEDSFKTAEVDMRARALREAQVEAQRLVEATEAALVADGDLLDASERATVDALVASLRALAPGDDADAIDTATKALAEGTDEFAARRMDKSIKRALAGRKLDEI.

It belongs to the heat shock protein 70 family.

Chaperone involved in the maturation of iron-sulfur cluster-containing proteins. Has a low intrinsic ATPase activity which is markedly stimulated by HscB. In Burkholderia mallei (strain NCTC 10247), this protein is Chaperone protein HscA homolog.